Reading from the N-terminus, the 382-residue chain is Lipid-A-disaccharide synthase (382 aa).

Belongs to the LpxB family.

It catalyses the reaction 2-N,3-O-bis[(3R)-3-hydroxytetradecanoyl]-alpha-D-glucosaminyl 1-phosphate + UDP-2-N,3-O-bis[(3R)-3-hydroxytetradecanoyl]-alpha-D-glucosamine = lipid A disaccharide (E. coli) + UDP + H(+). It carries out the reaction a lipid X + a UDP-2-N,3-O-bis[(3R)-3-hydroxyacyl]-alpha-D-glucosamine = a lipid A disaccharide + UDP + H(+). The protein operates within glycolipid biosynthesis; lipid IV(A) biosynthesis; lipid IV(A) from (3R)-3-hydroxytetradecanoyl-[acyl-carrier-protein] and UDP-N-acetyl-alpha-D-glucosamine: step 5/6. In terms of biological role, condensation of UDP-2,3-diacylglucosamine and 2,3-diacylglucosamine-1-phosphate to form lipid A disaccharide, a precursor of lipid A, a phosphorylated glycolipid that anchors the lipopolysaccharide to the outer membrane of the cell. In Escherichia coli O45:K1 (strain S88 / ExPEC), this protein is Lipid-A-disaccharide synthase.